Here is an 88-residue protein sequence, read N- to C-terminus: LYR motif-containing protein 2 (88 aa).

A mitochondrion-targeting transit peptide spans 1 to 19 (MAVSRLPPAALSLKQFLQR).

Belongs to the complex I LYR family.

Its subcellular location is the mitochondrion. Involved in efficient integration of the N-module into mitochondrial respiratory chain complex I. This Danio rerio (Zebrafish) protein is LYR motif-containing protein 2 (lyrm2).